A 372-amino-acid polypeptide reads, in one-letter code: tRNA-specific 2-thiouridylase MnmA (372 aa).

Residues 16–23 (GMSGGVDS) and M42 contribute to the ATP site. The segment at 102–104 (NPD) is interaction with target base in tRNA. Residue C107 is the Nucleophile of the active site. C107 and C205 are disulfide-bonded. G132 contacts ATP. The tract at residues 155 to 157 (KDQ) is interaction with tRNA. The active-site Cysteine persulfide intermediate is the C205. Residues 317–318 (RY) are interaction with tRNA.

The protein belongs to the MnmA/TRMU family.

It localises to the cytoplasm. The enzyme catalyses S-sulfanyl-L-cysteinyl-[protein] + uridine(34) in tRNA + AH2 + ATP = 2-thiouridine(34) in tRNA + L-cysteinyl-[protein] + A + AMP + diphosphate + H(+). In terms of biological role, catalyzes the 2-thiolation of uridine at the wobble position (U34) of tRNA, leading to the formation of s(2)U34. The polypeptide is tRNA-specific 2-thiouridylase MnmA (Shewanella sp. (strain MR-7)).